The primary structure comprises 295 residues: MKHKYLIAVSGGPDSMALLNKKRHLVEAVCHVNYHDREDSDNDEKIVRDYCKKYNLKLFVFDTHKDDVSKYKDINNLQTWYREIRYDFFEKISQELGIKKILIAHQKNDFLESAYMSLNKNKKNLFLGIRRKSKFRSLILIRPLLNKTKKSLEQYCRSKNIEFVIDYTNFWDRYSRNVVRKMMAEWDKKTFQKFYLKVKWFNLKNMFFIKLLDSKFNNWIKQDFDINYFLKIKNNYKESLIYLFLNHIGIKPNENKIEQIIEFINKNKNGSVKKYRLKENQFIEIKNKKILYSIC.

10-15 (SGGPDS) contributes to the ATP binding site.

This sequence belongs to the tRNA(Ile)-lysidine synthase family.

It localises to the cytoplasm. The enzyme catalyses cytidine(34) in tRNA(Ile2) + L-lysine + ATP = lysidine(34) in tRNA(Ile2) + AMP + diphosphate + H(+). Its function is as follows. Ligates lysine onto the cytidine present at position 34 of the AUA codon-specific tRNA(Ile) that contains the anticodon CAU, in an ATP-dependent manner. Cytidine is converted to lysidine, thus changing the amino acid specificity of the tRNA from methionine to isoleucine. The sequence is that of tRNA(Ile)-lysidine synthase from Malacoplasma penetrans (strain HF-2) (Mycoplasma penetrans).